Consider the following 132-residue polypeptide: ER membrane protein complex subunit 5 (132 aa).

The Cytoplasmic portion of the chain corresponds to Met1–Ser3. A helical membrane pass occupies residues Ser4–Phe22. Residues Ser23–Ile43 are Lumenal-facing. The chain crosses the membrane as a helical span at residues Asp44–Ile63. Residues Ala64–Arg132 lie on the Cytoplasmic side of the membrane.

The protein belongs to the membrane magnesium transporter (TC 1.A.67) family. Component of the ER membrane protein complex (EMC).

It localises to the endoplasmic reticulum membrane. The protein localises to the golgi apparatus membrane. The protein resides in the early endosome membrane. In terms of biological role, part of the endoplasmic reticulum membrane protein complex (EMC) that enables the energy-independent insertion into endoplasmic reticulum membranes of newly synthesized membrane proteins. Preferentially accommodates proteins with transmembrane domains that are weakly hydrophobic or contain destabilizing features such as charged and aromatic residues. Involved in the cotranslational insertion of multi-pass membrane proteins in which stop-transfer membrane-anchor sequences become ER membrane spanning helices. It is also required for the post-translational insertion of tail-anchored/TA proteins in endoplasmic reticulum membranes. By mediating the proper cotranslational insertion of N-terminal transmembrane domains in an N-exo topology, with translocated N-terminus in the lumen of the ER, controls the topology of multi-pass membrane proteins like the G protein-coupled receptors. By regulating the insertion of various proteins in membranes, it is indirectly involved in many cellular processes. May be involved in Mg(2+) transport. This chain is ER membrane protein complex subunit 5, found in Xenopus tropicalis (Western clawed frog).